We begin with the raw amino-acid sequence, 836 residues long: Protein IWS1 homolog A (836 aa).

Residues 1–542 (MEADNYSPEH…DMKSGKMGDY (542 aa)) are disordered. 8 stretches are compositionally biased toward basic and acidic residues: residues 20-36 (QDER…EQRS), 43-122 (HQSE…DRSP), 133-148 (EPVR…DVPR), 157-186 (DERH…DKAP), 206-218 (DSKD…HAAS), 288-309 (VPVK…KASD), 370-386 (RSSE…KKLQ), and 458-469 (ERKSKTETKSAD). Over residues 476-485 (SDSENEEENL) the composition is skewed to acidic residues. Basic and acidic residues predominate over residues 533-542 (DMKSGKMGDY). Residues 631 to 709 (SAIKEWLTPL…NEWSRPIFGL (79 aa)) form the TFIIS N-terminal domain. The segment at 714-746 (KGMTREEREQRDIEQMPQRRRMSSSGGQTPRRD) is disordered. The segment covering 716–727 (MTREEREQRDIE) has biased composition (basic and acidic residues).

The protein belongs to the IWS1 family.

It localises to the nucleus. Functionally, transcription factor which plays a key role in defining the composition of the RNA polymerase II (RNAPII) elongation complex and in modulating the production of mature mRNA transcripts. This Xenopus laevis (African clawed frog) protein is Protein IWS1 homolog A (iws1-a).